The chain runs to 99 residues: Putative septation protein SpoVG (99 aa).

It belongs to the SpoVG family.

Its function is as follows. Could be involved in septation. In Myxococcus xanthus (strain DK1622), this protein is Putative septation protein SpoVG.